Consider the following 142-residue polypeptide: Gonadotropin subunit beta-2 (142 aa).

A signal peptide spans 1–23 (MLGLHVGTLISLFLCILLEPIEG). 6 disulfide bridges follow: cysteine 29–cysteine 77, cysteine 43–cysteine 92, cysteine 46–cysteine 130, cysteine 54–cysteine 108, cysteine 58–cysteine 110, and cysteine 113–cysteine 120. The N-linked (GlcNAc...) asparagine glycan is linked to asparagine 33.

It belongs to the glycoprotein hormones subunit beta family. As to quaternary structure, heterodimer of an alpha and a beta chain.

The protein resides in the secreted. Its function is as follows. Involved in gametogenesis and steroidogenesis. In Oncorhynchus tshawytscha (Chinook salmon), this protein is Gonadotropin subunit beta-2 (cgbb).